Here is a 120-residue protein sequence, read N- to C-terminus: NAD(P)H-quinone oxidoreductase subunit 3, chloroplastic (120 aa).

The next 3 helical transmembrane spans lie at 9–29 (IFWA…LISG), 64–84 (MFAL…PWAV), and 88–108 (ILGV…VVGS).

This sequence belongs to the complex I subunit 3 family. NDH is composed of at least 16 different subunits, 5 of which are encoded in the nucleus.

The protein localises to the plastid. It localises to the chloroplast thylakoid membrane. The catalysed reaction is a plastoquinone + NADH + (n+1) H(+)(in) = a plastoquinol + NAD(+) + n H(+)(out). It carries out the reaction a plastoquinone + NADPH + (n+1) H(+)(in) = a plastoquinol + NADP(+) + n H(+)(out). Its function is as follows. NDH shuttles electrons from NAD(P)H:plastoquinone, via FMN and iron-sulfur (Fe-S) centers, to quinones in the photosynthetic chain and possibly in a chloroplast respiratory chain. The immediate electron acceptor for the enzyme in this species is believed to be plastoquinone. Couples the redox reaction to proton translocation, and thus conserves the redox energy in a proton gradient. The polypeptide is NAD(P)H-quinone oxidoreductase subunit 3, chloroplastic (Nymphaea alba (White water-lily)).